The chain runs to 201 residues: Large ribosomal subunit protein uL4 (201 aa).

Residues 43 to 66 form a disordered region; the sequence is TRAQKTRSEVSGGGKKPWRQKGTG.

Belongs to the universal ribosomal protein uL4 family. As to quaternary structure, part of the 50S ribosomal subunit.

In terms of biological role, one of the primary rRNA binding proteins, this protein initially binds near the 5'-end of the 23S rRNA. It is important during the early stages of 50S assembly. It makes multiple contacts with different domains of the 23S rRNA in the assembled 50S subunit and ribosome. Functionally, forms part of the polypeptide exit tunnel. In Tolumonas auensis (strain DSM 9187 / NBRC 110442 / TA 4), this protein is Large ribosomal subunit protein uL4.